The following is a 447-amino-acid chain: C4-dicarboxylate transport protein (447 aa).

Transmembrane regions (helical) follow at residues 19 to 39 (ILYVQVLVAIVAGVLLGHFYP), 55 to 75 (LVKMIIAPVIFLTVVTGIAGL), 90 to 110 (IYFLSFSTLALIIGMIVANVV), 155 to 175 (AFASGDILQVLFFAVLFGIAL), 199 to 219 (LVAIVMKAAPLGAFGAMAFTI), 232 to 252 (MLVGTFYLTSGLFVFVVLGLV), 343 to 363 (LLLVAMLSSKGAAGITGAGFI), and 366 to 386 (AATLSVVPSVPVAGMALILGV).

Belongs to the dicarboxylate/amino acid:cation symporter (DAACS) (TC 2.A.23) family.

It localises to the cell inner membrane. In terms of biological role, responsible for the transport of dicarboxylates such as succinate, fumarate, and malate from the periplasm across the membrane. This Rhodospirillum rubrum (strain ATCC 11170 / ATH 1.1.1 / DSM 467 / LMG 4362 / NCIMB 8255 / S1) protein is C4-dicarboxylate transport protein.